A 337-amino-acid polypeptide reads, in one-letter code: Ketol-acid reductoisomerase (NADP(+)) (337 aa).

A KARI N-terminal Rossmann domain is found at 3–183 (VEMFYDADAD…GGARAGVIKT (181 aa)). NADP(+)-binding positions include 26–29 (YGSQ), K49, S52, S54, and 84–87 (DTAQ). Residue H109 is part of the active site. G135 serves as a coordination point for NADP(+). Residues 184 to 329 (TFKDETETDL…KKLRDLMSWV (146 aa)) enclose the KARI C-terminal knotted domain. Mg(2+)-binding residues include D192, E196, E228, and E232. S253 is a binding site for substrate.

This sequence belongs to the ketol-acid reductoisomerase family. Requires Mg(2+) as cofactor.

It carries out the reaction (2R)-2,3-dihydroxy-3-methylbutanoate + NADP(+) = (2S)-2-acetolactate + NADPH + H(+). The catalysed reaction is (2R,3R)-2,3-dihydroxy-3-methylpentanoate + NADP(+) = (S)-2-ethyl-2-hydroxy-3-oxobutanoate + NADPH + H(+). It participates in amino-acid biosynthesis; L-isoleucine biosynthesis; L-isoleucine from 2-oxobutanoate: step 2/4. The protein operates within amino-acid biosynthesis; L-valine biosynthesis; L-valine from pyruvate: step 2/4. Its function is as follows. Involved in the biosynthesis of branched-chain amino acids (BCAA). Catalyzes an alkyl-migration followed by a ketol-acid reduction of (S)-2-acetolactate (S2AL) to yield (R)-2,3-dihydroxy-isovalerate. In the isomerase reaction, S2AL is rearranged via a Mg-dependent methyl migration to produce 3-hydroxy-3-methyl-2-ketobutyrate (HMKB). In the reductase reaction, this 2-ketoacid undergoes a metal-dependent reduction by NADPH to yield (R)-2,3-dihydroxy-isovalerate. The protein is Ketol-acid reductoisomerase (NADP(+)) of Mycolicibacterium gilvum (strain PYR-GCK) (Mycobacterium gilvum (strain PYR-GCK)).